We begin with the raw amino-acid sequence, 388 residues long: Succinate--CoA ligase [ADP-forming] subunit beta (388 aa).

The ATP-grasp domain occupies 9–244 (KSLFAEYGLP…PSQDDAREAH (236 aa)). ATP is bound by residues lysine 46, 53–55 (GRG), glutamate 99, threonine 102, and glutamate 107. Mg(2+) contacts are provided by asparagine 199 and aspartate 213. Substrate-binding positions include asparagine 264 and 321–323 (GIV).

Belongs to the succinate/malate CoA ligase beta subunit family. Heterotetramer of two alpha and two beta subunits. Requires Mg(2+) as cofactor.

It carries out the reaction succinate + ATP + CoA = succinyl-CoA + ADP + phosphate. The enzyme catalyses GTP + succinate + CoA = succinyl-CoA + GDP + phosphate. It functions in the pathway carbohydrate metabolism; tricarboxylic acid cycle; succinate from succinyl-CoA (ligase route): step 1/1. In terms of biological role, succinyl-CoA synthetase functions in the citric acid cycle (TCA), coupling the hydrolysis of succinyl-CoA to the synthesis of either ATP or GTP and thus represents the only step of substrate-level phosphorylation in the TCA. The beta subunit provides nucleotide specificity of the enzyme and binds the substrate succinate, while the binding sites for coenzyme A and phosphate are found in the alpha subunit. In Shewanella woodyi (strain ATCC 51908 / MS32), this protein is Succinate--CoA ligase [ADP-forming] subunit beta.